A 44-amino-acid chain; its full sequence is Small, acid-soluble spore protein P (44 aa).

A disordered region spans residues 1–44 (MSQTMSKNNREAKEKKGQPEPLSGSHKVKNRNHSRQKHHAHHDM). Residues 8-18 (NNREAKEKKGQ) are compositionally biased toward basic and acidic residues. Residues 26–44 (HKVKNRNHSRQKHHAHHDM) are compositionally biased toward basic residues.

This sequence belongs to the SspP family.

It is found in the spore core. The protein is Small, acid-soluble spore protein P of Bacillus cereus (strain ATCC 10987 / NRS 248).